A 243-amino-acid polypeptide reads, in one-letter code: Adenine phosphoribosyltransferase 1, chloroplastic (243 aa).

The transit peptide at M1 to S52 directs the protein to the chloroplast. Residue Q2 is modified to N-acetylalanine.

The protein belongs to the purine/pyrimidine phosphoribosyltransferase family. As to quaternary structure, homodimer.

It localises to the plastid. Its subcellular location is the chloroplast. It is found in the cytoplasm. The catalysed reaction is AMP + diphosphate = 5-phospho-alpha-D-ribose 1-diphosphate + adenine. It participates in purine metabolism; AMP biosynthesis via salvage pathway; AMP from adenine: step 1/1. Functionally, catalyzes a salvage reaction resulting in the formation of AMP, that is energically less costly than de novo synthesis. Contributes primarily to the recycling of adenine into adenylate nucleotides, but is also involved in the inactivation of cytokinins by phosphoribosylation. Catalyzes the conversion of cytokinins from free bases (active form) to the corresponding nucleotides (inactive form). This chain is Adenine phosphoribosyltransferase 1, chloroplastic (APT1), found in Arabidopsis thaliana (Mouse-ear cress).